Consider the following 251-residue polypeptide: Ubiquinone/menaquinone biosynthesis C-methyltransferase UbiE (251 aa).

S-adenosyl-L-methionine contacts are provided by residues threonine 74, aspartate 95, 123–124, and serine 140; that span reads NA.

The protein belongs to the class I-like SAM-binding methyltransferase superfamily. MenG/UbiE family.

It carries out the reaction a 2-demethylmenaquinol + S-adenosyl-L-methionine = a menaquinol + S-adenosyl-L-homocysteine + H(+). It catalyses the reaction a 2-methoxy-6-(all-trans-polyprenyl)benzene-1,4-diol + S-adenosyl-L-methionine = a 5-methoxy-2-methyl-3-(all-trans-polyprenyl)benzene-1,4-diol + S-adenosyl-L-homocysteine + H(+). It participates in quinol/quinone metabolism; menaquinone biosynthesis; menaquinol from 1,4-dihydroxy-2-naphthoate: step 2/2. It functions in the pathway cofactor biosynthesis; ubiquinone biosynthesis. In terms of biological role, methyltransferase required for the conversion of demethylmenaquinol (DMKH2) to menaquinol (MKH2) and the conversion of 2-polyprenyl-6-methoxy-1,4-benzoquinol (DDMQH2) to 2-polyprenyl-3-methyl-6-methoxy-1,4-benzoquinol (DMQH2). The chain is Ubiquinone/menaquinone biosynthesis C-methyltransferase UbiE from Salmonella arizonae (strain ATCC BAA-731 / CDC346-86 / RSK2980).